The primary structure comprises 307 residues: Acetyl-coenzyme A carboxylase carboxyl transferase subunit beta (307 aa).

Positions 28–297 constitute a CoA carboxyltransferase N-terminal domain; sequence LWVKCPDTGQ…TPEPGTAPEP (270 aa). The tract at residues 286–307 is disordered; it reads RRTPEPGTAPEPTTPEPLPNAA. Positions 292–307 are enriched in pro residues; it reads GTAPEPTTPEPLPNAA.

It belongs to the AccD/PCCB family. In terms of assembly, acetyl-CoA carboxylase is a heterohexamer composed of biotin carboxyl carrier protein (AccB), biotin carboxylase (AccC) and two subunits each of ACCase subunit alpha (AccA) and ACCase subunit beta (AccD).

The protein resides in the cytoplasm. It catalyses the reaction N(6)-carboxybiotinyl-L-lysyl-[protein] + acetyl-CoA = N(6)-biotinyl-L-lysyl-[protein] + malonyl-CoA. It functions in the pathway lipid metabolism; malonyl-CoA biosynthesis; malonyl-CoA from acetyl-CoA: step 1/1. In terms of biological role, component of the acetyl coenzyme A carboxylase (ACC) complex. Biotin carboxylase (BC) catalyzes the carboxylation of biotin on its carrier protein (BCCP) and then the CO(2) group is transferred by the transcarboxylase to acetyl-CoA to form malonyl-CoA. The polypeptide is Acetyl-coenzyme A carboxylase carboxyl transferase subunit beta (Methylorubrum extorquens (strain ATCC 14718 / DSM 1338 / JCM 2805 / NCIMB 9133 / AM1) (Methylobacterium extorquens)).